The primary structure comprises 196 residues: Spore maturation protein A (196 aa).

4 consecutive transmembrane segments (helical) span residues 1–21 (MVNI…MCNG), 37–57 (AITI…LMKI), 133–153 (ITFL…VIAV), and 163–183 (TDIV…AIII).

Its subcellular location is the cell membrane. Its function is as follows. Involved in spore core dehydration; might be involved in the transport of something into or out of the forespore or could be required for some modification of the cortex peptidoglycan structure. The protein is Spore maturation protein A (spmA) of Bacillus subtilis (strain 168).